We begin with the raw amino-acid sequence, 409 residues long: Dihydrolipoyllysine-residue succinyltransferase component of 2-oxoglutarate dehydrogenase complex (409 aa).

The Lipoyl-binding domain occupies 2 to 77; that stretch reads AIEILVPDLP…VSKQLLGKIS (76 aa). N6-lipoyllysine is present on K43. Over residues 83-107 the composition is skewed to polar residues; that stretch reads DVSSATLKATNEPTPSDRQNAAIEN. The interval 83-114 is disordered; it reads DVSSATLKATNEPTPSDRQNAAIENSHNHNAD. One can recognise a Peripheral subunit-binding (PSBD) domain in the interval 114 to 151; the sequence is DQSPVIRRLLAEHDLQADQIQGSGVGGRLTREDIEREI. Residues H380 and D384 contribute to the active site.

This sequence belongs to the 2-oxoacid dehydrogenase family. As to quaternary structure, forms a 24-polypeptide structural core with octahedral symmetry. Part of the 2-oxoglutarate dehydrogenase (OGDH) complex composed of E1 (2-oxoglutarate dehydrogenase), E2 (dihydrolipoamide succinyltransferase) and E3 (dihydrolipoamide dehydrogenase); the complex contains multiple copies of the three enzymatic components (E1, E2 and E3). (R)-lipoate is required as a cofactor.

The catalysed reaction is N(6)-[(R)-dihydrolipoyl]-L-lysyl-[protein] + succinyl-CoA = N(6)-[(R)-S(8)-succinyldihydrolipoyl]-L-lysyl-[protein] + CoA. The protein operates within amino-acid degradation; L-lysine degradation via saccharopine pathway; glutaryl-CoA from L-lysine: step 6/6. E2 component of the 2-oxoglutarate dehydrogenase (OGDH) complex which catalyzes the second step in the conversion of 2-oxoglutarate to succinyl-CoA and CO(2). The chain is Dihydrolipoyllysine-residue succinyltransferase component of 2-oxoglutarate dehydrogenase complex (sucB) from Haemophilus influenzae (strain ATCC 51907 / DSM 11121 / KW20 / Rd).